We begin with the raw amino-acid sequence, 442 residues long: D-serine dehydratase 1 (442 aa).

An N6-(pyridoxal phosphate)lysine modification is found at K118.

Belongs to the serine/threonine dehydratase family. DsdA subfamily. Monomer. Pyridoxal 5'-phosphate is required as a cofactor.

The catalysed reaction is D-serine = pyruvate + NH4(+). This Escherichia coli (strain UTI89 / UPEC) protein is D-serine dehydratase 1.